A 95-amino-acid chain; its full sequence is Putative RelE-like toxin protein (95 aa).

This sequence belongs to the RelE toxin family.

Its function is as follows. Toxic component of a type II toxin-antitoxin (TA) system. The chain is Putative RelE-like toxin protein from Escherichia coli.